A 230-amino-acid chain; its full sequence is Ureidoacrylate amidohydrolase RutB (230 aa).

D24 acts as the Proton acceptor in catalysis. K133 is an active-site residue. Residue C166 is the Nucleophile of the active site.

Belongs to the isochorismatase family. RutB subfamily.

It carries out the reaction (Z)-3-ureidoacrylate + H2O + H(+) = (Z)-3-aminoacrylate + NH4(+) + CO2. The catalysed reaction is (Z)-3-ureidoacrylate + H2O = (Z)-3-aminoacrylate + carbamate + H(+). It catalyses the reaction (Z)-2-methylureidoacrylate + H2O + H(+) = (Z)-2-methylaminoacrylate + NH4(+) + CO2. Functionally, hydrolyzes ureidoacrylate to form aminoacrylate and carbamate. The carbamate hydrolyzes spontaneously, thereby releasing one of the nitrogen atoms of the pyrimidine ring as ammonia and one of its carbon atoms as CO2. In Escherichia coli (strain B / BL21-DE3), this protein is Ureidoacrylate amidohydrolase RutB.